A 184-amino-acid polypeptide reads, in one-letter code: Gremlin-1 (184 aa).

Residues 1-24 (MVRTLYAIGAVFLLTGFLLPTAEG) form the signal peptide. Positions 24-77 (GRKRNRGSQGAIPPPDKDQPNDSEQMQTQQQSGSRHRERGKGTSMPAEEVLESS) are disordered. Asparagine 44 carries an N-linked (GlcNAc...) asparagine glycan. The span at 45-56 (DSEQMQTQQQSG) shows a compositional bias: polar residues. 4 disulfides stabilise this stretch: cysteine 94/cysteine 144, cysteine 108/cysteine 158, cysteine 118/cysteine 176, and cysteine 122/cysteine 178. A CTCK domain is found at 94-184 (CKTQPLKQTI…ECRCISIDLD (91 aa)).

The protein belongs to the DAN family.

The protein localises to the secreted. In terms of biological role, cytokine that may play a role in the development of the medial pallium and during optic nerve and pecten development by modulating BMP signaling. This Gallus gallus (Chicken) protein is Gremlin-1 (GREM1).